Consider the following 315-residue polypeptide: Glycine--tRNA ligase alpha subunit (315 aa).

Belongs to the class-II aminoacyl-tRNA synthetase family. As to quaternary structure, tetramer of two alpha and two beta subunits.

It localises to the cytoplasm. The enzyme catalyses tRNA(Gly) + glycine + ATP = glycyl-tRNA(Gly) + AMP + diphosphate. This Pseudomonas putida (strain ATCC 47054 / DSM 6125 / CFBP 8728 / NCIMB 11950 / KT2440) protein is Glycine--tRNA ligase alpha subunit.